Here is a 458-residue protein sequence, read N- to C-terminus: Serine protease HTRA2, mitochondrial (458 aa).

A mitochondrion-targeting transit peptide spans 1–31 (MAALRAGRGAGWSLRGWRALWGGRWGKGPLL). Residues 32–133 (TPDLRALLTS…GGRGPPAVLA (102 aa)) constitute a propeptide that is removed on maturation. A helical membrane pass occupies residues 105–125 (VWLAVALGAGGAVLLLFWGGG). Residues 134–137 (SVLG) carry the IAP-binding motif motif. Positions 166–342 (ILGRHPFSGR…IPSDRLREFL (177 aa)) are serine protease. Catalysis depends on charge relay system residues H198, D228, and S306. One can recognise a PDZ domain in the interval 364-445 (VMMLTLTPSI…QLAVRIRRGQ (82 aa)).

This sequence belongs to the peptidase S1C family. In terms of assembly, homotrimer. Interacts with MXI2. Interacts with THAP5 under apoptotic conditions. The mature protein, but not the precursor, binds to BIRC2/c-IAP1, BIRC3/c-IAP2 and XIAP/BIRC4. Interacts with BIRC6/bruce. Interacts with AREL1 (via HECT domain); in the cytoplasm following induction of apoptosis. Post-translationally, ubiquitinated by BIRC6; this activity is inhibited by DIABLO/SMAC. Autoproteolytically activated.

It localises to the mitochondrion intermembrane space. The protein resides in the mitochondrion membrane. The enzyme catalyses Cleavage of non-polar aliphatic amino-acids at the P1 position, with a preference for Val, Ile and Met. At the P2 and P3 positions, Arg is selected most strongly with a secondary preference for other hydrophilic residues.. Its activity is regulated as follows. Inhibited by BIRC6. Its function is as follows. Serine protease that shows proteolytic activity against a non-specific substrate beta-casein. Promotes apoptosis by either relieving the inhibition of BIRC proteins on caspases, leading to an increase in caspase activity; or by a BIRC inhibition-independent, caspase-independent and serine protease activity-dependent mechanism. Cleaves BIRC6 and relieves its inhibition on CASP3, CASP7 and CASP9, but it is also prone to inhibition by BIRC6. Cleaves THAP5 and promotes its degradation during apoptosis. The protein is Serine protease HTRA2, mitochondrial (HTRA2) of Bos taurus (Bovine).